Reading from the N-terminus, the 382-residue chain is Polyadenylate-binding protein 5 (382 aa).

4 RRM domains span residues 18 to 96 (AALY…WSQP), 106 to 182 (GNIF…RFKF), 199 to 276 (TNVF…RAQK), and 302 to 378 (VPIY…LGQA).

It is found in the cytoplasm. Binds the poly(A) tail of mRNA. May be involved in cytoplasmic regulatory processes of mRNA metabolism. Can probably bind to cytoplasmic RNA sequences other than poly(A) in vivo. The chain is Polyadenylate-binding protein 5 (PABPC5) from Macaca mulatta (Rhesus macaque).